A 365-amino-acid chain; its full sequence is Quinolone epoxide rearrangement protein asqO (365 aa).

It belongs to the quinolone epoxide rearrangement protein penF family.

It catalyses the reaction (1'E,3'E)-5-(3,3-dimethyloxiran-2-yl)-3-methylhexa-1,3-dienyl-quinolinone B = aspoquinolone A. The catalysed reaction is (1'E,3'E)-5-(3,3-dimethyloxiran-2-yl)-3-methylhexa-1,3-dienyl-quinolinone B = aspoquinolone B. It participates in secondary metabolite biosynthesis. It functions in the pathway alkaloid biosynthesis. The protein operates within mycotoxin biosynthesis. Functionally, quinolone epoxide rearrangement protein; part of the gene cluster that mediates the biosynthesis of the aspoquinolone mycotoxins. Within the pathway, asqO catalyzes an enzymatic 3-exo-tet cyclization to yield the cyclopropyl-THF ring system in aspoquinolone. The first step of the pathway is catalyzed by the nonribosomal peptide synthetase asqK that condenses anthranilic acid and O-methyl-L-tyrosine to produce 4'-methoxycyclopeptin. 4'-methoxycyclopeptin is then converted to 4'-methoxydehydrocyclopeptin by the ketoglutarate-dependent dioxygenase asqJ. AsqJ also converts its first product 4'-methoxydehydrocyclopeptin to 4'-methoxycyclopenin. The following conversion of 4'-methoxycyclopenin into 4'-methoxyviridicatin is catalyzed by the cyclopenase asqI. 4'-methoxyviridicatin is the precursor of quinolone natural products, and is further converted to quinolinone B. The prenyltransferase asqH1 then catalyzes the canonical Friedel-Crafts alkylation of quinolinone B with dimethylallyl cation to yield dimethylallyl quinolone, which is subjected to FAD-dependent dehydrogenation by the FAD-linked oxidoreductase asqF to yield conjugated aryl diene. The delta(3') double bond then serves as the site of the second alkylation with DMAPP catalyzed by the prenyltransferase asqH2 to yield a carbenium ion intermediate, which can be attacked by H(2)O to yield a styrenyl quinolone containing a C3'-hydroxyprenyl chain. The FAD-dependent monooxygenase asqG performs epoxidation of the terminal C7'-C8' olefin. Finally, after dehydratation of the epoxide at C3 by asqC, the quinolone epoxide rearrangement protein asqO catalyzes an enzymatic 3-exo-tet cyclization to yield the cyclopropyl-THF ring system in aspoquinolone. This is Quinolone epoxide rearrangement protein asqO from Emericella nidulans (strain FGSC A4 / ATCC 38163 / CBS 112.46 / NRRL 194 / M139) (Aspergillus nidulans).